The following is a 249-amino-acid chain: Protein twisted gastrulation (249 aa).

The N-terminal stretch at 1–23 (MQLLCYFVILFVGIAPWSSLAND) is a signal peptide. A glycan (N-linked (GlcNAc...) asparagine) is linked at Asn199.

This sequence belongs to the twisted gastrulation protein family. As to quaternary structure, component of a complex composed of dpp, sog and tsg. As to expression, first appears in stage 4 embryos, expressed in two domains: a broad mid-dorsal saddle and an anterior cap, expression between the domains is continuous across the dorsal midline. At stage 5, expression is refined into 4 graded stripes in the mid-dorsal region and a paired domain in the anterior region. During stages 7 and 8, anterior expression fades and the mid dorsal stripes are located between the anterior and posterior transverse furrow (ATF and PTF). Expressing cells become incorporated into the deepening PTF.

It localises to the secreted. Functionally, involved in dorsal-ventral patterning. Required for specification of a narrow strip of dorsal midline cells that will give rise to the amnioserosa, but not for specification of dorsal ectoderm cells. Inhibits BMP signaling; enhances the binding of sog to dpp, thus enhancing the antagonistic activity of sog. In Drosophila melanogaster (Fruit fly), this protein is Protein twisted gastrulation (tsg).